A 320-amino-acid chain; its full sequence is MAERTARLLLLTVTVGLAWGSQGDREPVYRDCVLRCEERNCSGDALKHFRSLQPIYMSLAGWTCRDDCKYECMWITVGLYLQEGHRVPQFHGKWPFSRFLFIQEPASAVASLLNGLASLVMLCRYRASVPASSPMYHTCMAFAWVSLNAWFWSTVFHTRDTDLTEKMDYFCASAVILHSIYLCCVRTVGLQHPSVARAFGATLLLMLLLHTSYLSLVRFDYSYNMMANVAIGLVNLAWWLAWCLRNHRRLPHTRKCVAVVLLLQGLSLLELLDFPPLFWVLDAHAIWHISTIPVHVLFFRFLEDDSLYLLKESEAKFKLD.

An N-terminal signal peptide occupies residues 1-20; the sequence is MAERTARLLLLTVTVGLAWG. The Lumenal segment spans residues 21–98; the sequence is SQGDREPVYR…QFHGKWPFSR (78 aa). The N-linked (GlcNAc...) asparagine glycan is linked to Asn40. Residues 99–119 form a helical membrane-spanning segment; it reads FLFIQEPASAVASLLNGLASL. At 120–135 the chain is on the cytoplasmic side; it reads VMLCRYRASVPASSPM. A helical membrane pass occupies residues 136-156; sequence YHTCMAFAWVSLNAWFWSTVF. Residues 157 to 169 lie on the Lumenal side of the membrane; sequence HTRDTDLTEKMDY. Residues 170 to 190 form a helical membrane-spanning segment; that stretch reads FCASAVILHSIYLCCVRTVGL. Over 191–198 the chain is Cytoplasmic; that stretch reads QHPSVARA. The helical transmembrane segment at 199 to 219 threads the bilayer; the sequence is FGATLLLMLLLHTSYLSLVRF. The Lumenal segment spans residues 220 to 223; it reads DYSY. Residues 224–244 traverse the membrane as a helical segment; the sequence is NMMANVAIGLVNLAWWLAWCL. Topologically, residues 245–258 are cytoplasmic; sequence RNHRRLPHTRKCVA. Residues 259–279 traverse the membrane as a helical segment; the sequence is VVLLLQGLSLLELLDFPPLFW. The Lumenal portion of the chain corresponds to 280 to 282; that stretch reads VLD. A helical membrane pass occupies residues 283-303; that stretch reads AHAIWHISTIPVHVLFFRFLE. Over 304-320 the chain is Cytoplasmic; sequence DDSLYLLKESEAKFKLD.

It belongs to the PGAP3 family.

The protein resides in the golgi apparatus membrane. Functionally, involved in the fatty acid remodeling steps of GPI-anchor maturation where the unsaturated acyl chain at sn-2 of inositol phosphate is replaced by a saturated stearoyl chain. May catalyze the first step of the fatty acid remodeling, by removing the unsaturated acyl chain at sn-2 of inositol phosphate, generating a lyso-GPI intermediate. The fatty acid remodeling steps is critical for the integration of GPI-APs into lipid rafts. The protein is GPI-specific phospholipase A2-like PGAP3 (PGAP3) of Cricetulus griseus (Chinese hamster).